The following is a 164-amino-acid chain: Urease subunit beta (164 aa).

Composition is skewed to polar residues over residues 1–10 (MSTKTNSTKA) and 20–32 (TNRGTKSSAGYSE). The segment at 1 to 32 (MSTKTNSTKATSEKTDSLKTNRGTKSSAGYSE) is disordered.

Belongs to the urease beta subunit family. In terms of assembly, heterotrimer of UreA (gamma), UreB (beta) and UreC (alpha) subunits. Three heterotrimers associate to form the active enzyme.

The protein localises to the cytoplasm. The enzyme catalyses urea + 2 H2O + H(+) = hydrogencarbonate + 2 NH4(+). The protein operates within nitrogen metabolism; urea degradation; CO(2) and NH(3) from urea (urease route): step 1/1. This Yersinia enterocolitica serotype O:8 / biotype 1B (strain NCTC 13174 / 8081) protein is Urease subunit beta.